The chain runs to 282 residues: Trans,polycis-polyprenyl diphosphate synthase ((2Z,6E)-farnesyl diphosphate specific) (282 aa).

The segment at 1 to 30 is disordered; it reads MSPKTVFSTDTHREPIPPQPHPSGARPPQL. Residue aspartate 44 is part of the active site. Mg(2+) is bound at residue aspartate 44. Residues 45 to 48, tryptophan 49, arginine 57, histidine 61, and 89 to 91 each bind substrate; these read GNGR and STE. The Proton acceptor role is filled by asparagine 92. Substrate-binding positions include tryptophan 93, arginine 95, arginine 212, and 218–220; that span reads RLS. Glutamate 231 provides a ligand contact to Mg(2+). Residues 262–282 form a disordered region; sequence GGAEPNPVGPPQSAAGAQGQD.

It belongs to the UPP synthase family. In terms of assembly, homodimer. Mg(2+) serves as cofactor.

It carries out the reaction (2Z,6E)-farnesyl diphosphate + 10 isopentenyl diphosphate = di-trans,deca-cis-tridecaprenyl diphosphate + 10 diphosphate. It catalyses the reaction (2Z,6E)-farnesyl diphosphate + 11 isopentenyl diphosphate = di-trans,undeca-cis-tetradecaprenyl diphosphate + 11 diphosphate. The catalysed reaction is (2Z,6E)-farnesyl diphosphate + 9 isopentenyl diphosphate = di-trans,nona-cis-dodecaprenyl diphosphate + 9 diphosphate. Its function is as follows. Catalyzes the synthesis of Z,E-mixed prenyl diphosphates by a condensation of isopentenyl diphosphate to an allylic diphosphate. It shows a large substrate specificity accepting dimethylallyl diphosphate (DMAPP), GPP, E,Efarnesyl diphosphate (FPP), E,E,E-geranylgeranyl diphosphate (GGPP), neryl diphosphate (Z-GPP), and (2Z,6E)-farnesyl diphosphate (Z,E-FPP) as allylic substrates. The enzyme exhibits the highest activity when Z,E-FPP is employed as an allylic substrate. The major product is dodecaprenyl diphosphate (C60) under every allylic substrate conditions, but the enzyme is also able to synthesize even C70 prenyl diphosphate as the maximum chain-length product. This chain is Trans,polycis-polyprenyl diphosphate synthase ((2Z,6E)-farnesyl diphosphate specific), found in Thermobifida fusca (strain YX).